The primary structure comprises 129 residues: NADH-quinone oxidoreductase subunit A (129 aa).

3 consecutive transmembrane segments (helical) span residues 14-34 (LAIH…VAAW), 67-87 (FLIA…FAWA), and 95-115 (WLGL…LVYL).

The protein belongs to the complex I subunit 3 family. NDH-1 is composed of 14 different subunits. Subunits NuoA, H, J, K, L, M, N constitute the membrane sector of the complex.

The protein localises to the cell inner membrane. The enzyme catalyses a quinone + NADH + 5 H(+)(in) = a quinol + NAD(+) + 4 H(+)(out). In terms of biological role, NDH-1 shuttles electrons from NADH, via FMN and iron-sulfur (Fe-S) centers, to quinones in the respiratory chain. The immediate electron acceptor for the enzyme in this species is believed to be ubiquinone. Couples the redox reaction to proton translocation (for every two electrons transferred, four hydrogen ions are translocated across the cytoplasmic membrane), and thus conserves the redox energy in a proton gradient. This chain is NADH-quinone oxidoreductase subunit A, found in Rhodopseudomonas palustris (strain BisB5).